Reading from the N-terminus, the 398-residue chain is Elongation factor Tu (398 aa).

Residues Lys-10 to Glu-207 form the tr-type G domain. Residues Gly-19–Thr-26 are G1. Gly-19–Thr-26 contributes to the GTP binding site. Mg(2+) is bound at residue Thr-26. The interval Gly-63 to Asn-67 is G2. The G3 stretch occupies residues Asp-84 to Gly-87. Residues Asp-84–His-88 and Asn-139–Asp-142 each bind GTP. Positions Asn-139–Asp-142 are G4. The interval Ser-177–Leu-179 is G5.

This sequence belongs to the TRAFAC class translation factor GTPase superfamily. Classic translation factor GTPase family. EF-Tu/EF-1A subfamily. In terms of assembly, monomer.

The protein localises to the cytoplasm. It catalyses the reaction GTP + H2O = GDP + phosphate + H(+). GTP hydrolase that promotes the GTP-dependent binding of aminoacyl-tRNA to the A-site of ribosomes during protein biosynthesis. This Streptococcus agalactiae serotype Ia (strain ATCC 27591 / A909 / CDC SS700) protein is Elongation factor Tu.